The chain runs to 91 residues: Small ribosomal subunit protein uS15 (91 aa).

This sequence belongs to the universal ribosomal protein uS15 family. In terms of assembly, part of the 30S ribosomal subunit. Forms a bridge to the 50S subunit in the 70S ribosome, contacting the 23S rRNA.

In terms of biological role, one of the primary rRNA binding proteins, it binds directly to 16S rRNA where it helps nucleate assembly of the platform of the 30S subunit by binding and bridging several RNA helices of the 16S rRNA. Functionally, forms an intersubunit bridge (bridge B4) with the 23S rRNA of the 50S subunit in the ribosome. This Rickettsia peacockii (strain Rustic) protein is Small ribosomal subunit protein uS15.